The following is a 143-amino-acid chain: Auxin-responsive protein SAUR67 (143 aa).

The protein belongs to the ARG7 family.

The protein resides in the cell membrane. Functionally, may promote auxin-stimulated organ elongation, such as hypocotyls, stamen filaments and petals. The sequence is that of Auxin-responsive protein SAUR67 from Arabidopsis thaliana (Mouse-ear cress).